The chain runs to 793 residues: Signal transducer and activator of transcription 5A (793 aa).

Tyrosine 90 is subject to Phosphotyrosine. A Phosphoserine modification is found at serine 128. Residues 589 to 686 (WNDGAILGFV…EVFAKYYTPV (98 aa)) form the SH2 domain. Tyrosine 682 is subject to Phosphotyrosine. Tyrosine 694 carries the post-translational modification Phosphotyrosine; by JAK2. The interval 772–793 (DSLDPRLSPPAGLFTSARSSLS) is disordered. Serine 779 carries the phosphoserine modification.

The protein belongs to the transcription factor STAT family. In terms of assembly, forms a homodimer or a heterodimer with a related family member. Binds NR3C1. Interacts with NCOA1 and SOCS7. Interacts with ERBB4. Interacts with EBF4. ISGylated. In terms of processing, tyrosine phosphorylated in response to KITLG/SCF, IL2, IL3, IL7, IL15, CSF2/GMCSF, GH1, PRL, EPO and THPO. Activated KIT promotes phosphorylation on tyrosine residues and subsequent translocation to the nucleus. Tyrosine phosphorylated in response to constitutively activated FGFR1, FGFR2, FGFR3 and FGFR4. Tyrosine phosphorylation is required for DNA-binding activity and dimerization. Serine phosphorylation is also required for maximal transcriptional activity. Tyrosine phosphorylated in response to signaling via activated FLT3; wild-type FLT3 results in much weaker phosphorylation than constitutively activated mutant FLT3. Alternatively, can be phosphorylated by JAK2 at Tyr-694. Expressed in heart, lung, and weakly in muscle.

The protein localises to the cytoplasm. It localises to the nucleus. Carries out a dual function: signal transduction and activation of transcription. Mediates cellular responses to the cytokine KITLG/SCF and other growth factors. May mediate cellular responses to activated FGFR1, FGFR2, FGFR3 and FGFR4. Binds to the GAS element and activates PRL-induced transcription. Regulates the expression of milk proteins during lactation. This Rattus norvegicus (Rat) protein is Signal transducer and activator of transcription 5A (Stat5a).